Reading from the N-terminus, the 139-residue chain is Putative nickel-responsive regulator (139 aa).

H79, H90, H92, and C98 together coordinate Ni(2+).

Belongs to the transcriptional regulatory CopG/NikR family. Ni(2+) is required as a cofactor.

Transcriptional regulator. This Anaeromyxobacter dehalogenans (strain 2CP-C) protein is Putative nickel-responsive regulator.